The primary structure comprises 179 residues: Bifunctional protein PyrR (179 aa).

The PRPP-binding motif lies at 100–112 (VILVDDVLFTGRT).

This sequence belongs to the purine/pyrimidine phosphoribosyltransferase family. PyrR subfamily.

It carries out the reaction UMP + diphosphate = 5-phospho-alpha-D-ribose 1-diphosphate + uracil. Functionally, regulates the transcription of the pyrimidine nucleotide (pyr) operon in response to exogenous pyrimidines. Its function is as follows. Also displays a weak uracil phosphoribosyltransferase activity which is not physiologically significant. This Actinobacillus succinogenes (strain ATCC 55618 / DSM 22257 / CCUG 43843 / 130Z) protein is Bifunctional protein PyrR.